A 228-amino-acid chain; its full sequence is Lipoprotein-releasing system ATP-binding protein LolD (228 aa).

In terms of domain architecture, ABC transporter spans 6-228 (LRLSGIEKTY…LSDGRLSAES (223 aa)). 43–50 (APSGAGKS) is a binding site for ATP.

This sequence belongs to the ABC transporter superfamily. Lipoprotein translocase (TC 3.A.1.125) family. The complex is composed of two ATP-binding proteins (LolD) and two transmembrane proteins (LolC and LolE).

It localises to the cell inner membrane. In terms of biological role, part of the ABC transporter complex LolCDE involved in the translocation of mature outer membrane-directed lipoproteins, from the inner membrane to the periplasmic chaperone, LolA. Responsible for the formation of the LolA-lipoprotein complex in an ATP-dependent manner. In Ruegeria pomeroyi (strain ATCC 700808 / DSM 15171 / DSS-3) (Silicibacter pomeroyi), this protein is Lipoprotein-releasing system ATP-binding protein LolD.